A 488-amino-acid polypeptide reads, in one-letter code: Calcium/calmodulin-dependent protein kinase type II subunit delta (488 aa).

The residue at position 2 (A2) is an N-acetylalanine. The Protein kinase domain maps to 14 to 272 (YQLFEELGKG…ASEALKHPWI (259 aa)). ATP-binding positions include 20-28 (LGKGAFSVV) and K43. D136 acts as the Proton acceptor in catalysis. Residues 283–292 (HRQETVDCLK) form an autoinhibitory domain region. T287 carries the phosphothreonine; by autocatalysis modification. Positions 291–301 (LKKFNARRKLK) are calmodulin-binding. Phosphothreonine; by autocatalysis occurs at positions 306 and 307. Phosphoserine is present on S315. N6-acetyllysine is present on K317. S318 and S340 each carry phosphoserine. The segment at 325 to 350 (GVKKRKSSSSVQMMESTESSNTTIED) is disordered. The segment covering 332–347 (SSSVQMMESTESSNTT) has biased composition (polar residues). At T341 the chain carries Phosphothreonine. At S343 the chain carries Phosphoserine. T346 and T347 each carry phosphothreonine. A Phosphoserine modification is found at S414.

It belongs to the protein kinase superfamily. CAMK Ser/Thr protein kinase family. CaMK subfamily. In terms of assembly, CAMK2 is composed of 4 different chains: alpha (CAMK2A), beta (CAMK2B), gamma (CAMK2G), and delta (CAMK2D). The different isoforms assemble into homo- or heteromultimeric holoenzymes composed of 12 subunits with two hexameric rings stacked one on top of the other. Interacts with RRAD and CACNB2. Post-translationally, autophosphorylation of Thr-287 following activation by Ca(2+)/calmodulin. Phosphorylation of Thr-287 locks the kinase into an activated state.

The protein resides in the cell membrane. It is found in the sarcolemma. Its subcellular location is the sarcoplasmic reticulum membrane. The enzyme catalyses L-seryl-[protein] + ATP = O-phospho-L-seryl-[protein] + ADP + H(+). It carries out the reaction L-threonyl-[protein] + ATP = O-phospho-L-threonyl-[protein] + ADP + H(+). Its activity is regulated as follows. Activated by Ca(2+)/calmodulin. Binding of calmodulin results in conformational change that relieves intrasteric autoinhibition and allows autophosphorylation of Thr-287 which turns the kinase in a constitutively active form and confers to the kinase a Ca(2+)-independent activity. Its function is as follows. Calcium/calmodulin-dependent protein kinase involved in the regulation of Ca(2+) homeostatis and excitation-contraction coupling (ECC) in heart by targeting ion channels, transporters and accessory proteins involved in Ca(2+) influx into the myocyte, Ca(2+) release from the sarcoplasmic reticulum (SR), SR Ca(2+) uptake and Na(+) and K(+) channel transport. Targets also transcription factors and signaling molecules to regulate heart function. In its activated form, is involved in the pathogenesis of dilated cardiomyopathy and heart failure. Contributes to cardiac decompensation and heart failure by regulating SR Ca(2+) release via direct phosphorylation of RYR2 Ca(2+) channel on 'Ser-2808'. In the nucleus, phosphorylates the MEF2 repressor HDAC4, promoting its nuclear export and binding to 14-3-3 protein, and expression of MEF2 and genes involved in the hypertrophic program. Is essential for left ventricular remodeling responses to myocardial infarction. In pathological myocardial remodeling acts downstream of the beta adrenergic receptor signaling cascade to regulate key proteins involved in ECC. Regulates Ca(2+) influx to myocytes by binding and phosphorylating the L-type Ca(2+) channel subunit beta-2 CACNB2. In addition to Ca(2+) channels, can target and regulate the cardiac sarcolemmal Na(+) channel Nav1.5/SCN5A and the K+ channel Kv4.3/KCND3, which contribute to arrhythmogenesis in heart failure. Phosphorylates phospholamban (PLN/PLB), an endogenous inhibitor of SERCA2A/ATP2A2, contributing to the enhancement of SR Ca(2+) uptake that may be important in frequency-dependent acceleration of relaxation (FDAR) and maintenance of contractile function during acidosis. May participate in the modulation of skeletal muscle function in response to exercise, by regulating SR Ca(2+) transport through phosphorylation of PLN/PLB and triadin, a ryanodine receptor-coupling factor. In response to interferon-gamma (IFN-gamma) stimulation, catalyzes phosphorylation of STAT1, stimulating the JAK-STAT signaling pathway. The polypeptide is Calcium/calmodulin-dependent protein kinase type II subunit delta (CAMK2D) (Bos taurus (Bovine)).